A 396-amino-acid chain; its full sequence is Phosphoglycerate kinase (396 aa).

Residues 21–23, Arg36, 59–62, Arg118, and Arg151 contribute to the substrate site; these read DFN and HLGR. ATP is bound by residues Lys201, Gly292, Glu323, and 349 to 352; that span reads GGDS.

This sequence belongs to the phosphoglycerate kinase family. As to quaternary structure, monomer.

It is found in the cytoplasm. The catalysed reaction is (2R)-3-phosphoglycerate + ATP = (2R)-3-phospho-glyceroyl phosphate + ADP. Its pathway is carbohydrate degradation; glycolysis; pyruvate from D-glyceraldehyde 3-phosphate: step 2/5. The protein is Phosphoglycerate kinase of Leptospira borgpetersenii serovar Hardjo-bovis (strain L550).